The following is a 101-amino-acid chain: Trp operon repressor homolog (101 aa).

The DNA-binding element occupies 59-82 (QREIQQNLSTSAATITRGSNMLKM).

The protein belongs to the TrpR family. Homodimer.

It localises to the cytoplasm. Its function is as follows. This protein is an aporepressor. When complexed with L-tryptophan it binds the operator region of the trp operon and prevents the initiation of transcription. The protein is Trp operon repressor homolog of Actinobacillus succinogenes (strain ATCC 55618 / DSM 22257 / CCUG 43843 / 130Z).